Reading from the N-terminus, the 613-residue chain is Dihydroxy-acid dehydratase (613 aa).

Asp81 contributes to the Mg(2+) binding site. Position 122 (Cys122) interacts with [2Fe-2S] cluster. Residues Asp123 and Lys124 each contribute to the Mg(2+) site. Lys124 carries the N6-carboxylysine modification. Cys195 lines the [2Fe-2S] cluster pocket. Glu491 serves as a coordination point for Mg(2+). The active-site Proton acceptor is Ser517.

This sequence belongs to the IlvD/Edd family. As to quaternary structure, homodimer. Requires [2Fe-2S] cluster as cofactor. Mg(2+) serves as cofactor.

The enzyme catalyses (2R)-2,3-dihydroxy-3-methylbutanoate = 3-methyl-2-oxobutanoate + H2O. The catalysed reaction is (2R,3R)-2,3-dihydroxy-3-methylpentanoate = (S)-3-methyl-2-oxopentanoate + H2O. It functions in the pathway amino-acid biosynthesis; L-isoleucine biosynthesis; L-isoleucine from 2-oxobutanoate: step 3/4. The protein operates within amino-acid biosynthesis; L-valine biosynthesis; L-valine from pyruvate: step 3/4. Functions in the biosynthesis of branched-chain amino acids. Catalyzes the dehydration of (2R,3R)-2,3-dihydroxy-3-methylpentanoate (2,3-dihydroxy-3-methylvalerate) into 2-oxo-3-methylpentanoate (2-oxo-3-methylvalerate) and of (2R)-2,3-dihydroxy-3-methylbutanoate (2,3-dihydroxyisovalerate) into 2-oxo-3-methylbutanoate (2-oxoisovalerate), the penultimate precursor to L-isoleucine and L-valine, respectively. This is Dihydroxy-acid dehydratase from Vibrio cholerae serotype O1 (strain ATCC 39541 / Classical Ogawa 395 / O395).